The primary structure comprises 499 residues: Endoglucanase (499 aa).

An N-terminal signal peptide occupies residues 1 to 29; the sequence is MKRSISIFITCLLITLLTMGGMLASPASA. Substrate contacts are provided by residues H65, 69-70, Y96, and H131; that span reads WY. E169 serves as the catalytic Proton donor. Y231 serves as a coordination point for substrate. The Nucleophile role is filled by E257. Substrate is bound by residues 263 to 264, W291, and 296 to 298; these read AS and KQE. Positions 350 to 499 constitute a CBM3 domain; it reads QENGISVQYR…GKLIWGTEPN (150 aa).

The protein belongs to the glycosyl hydrolase 5 (cellulase A) family.

The catalysed reaction is Endohydrolysis of (1-&gt;4)-beta-D-glucosidic linkages in cellulose, lichenin and cereal beta-D-glucans.. In Bacillus subtilis, this protein is Endoglucanase (bglC).